The chain runs to 208 residues: ATP phosphoribosyltransferase (208 aa).

This sequence belongs to the ATP phosphoribosyltransferase family. Short subfamily. As to quaternary structure, heteromultimer composed of HisG and HisZ subunits.

The protein localises to the cytoplasm. The enzyme catalyses 1-(5-phospho-beta-D-ribosyl)-ATP + diphosphate = 5-phospho-alpha-D-ribose 1-diphosphate + ATP. The protein operates within amino-acid biosynthesis; L-histidine biosynthesis; L-histidine from 5-phospho-alpha-D-ribose 1-diphosphate: step 1/9. Functionally, catalyzes the condensation of ATP and 5-phosphoribose 1-diphosphate to form N'-(5'-phosphoribosyl)-ATP (PR-ATP). Has a crucial role in the pathway because the rate of histidine biosynthesis seems to be controlled primarily by regulation of HisG enzymatic activity. The polypeptide is ATP phosphoribosyltransferase (Clostridioides difficile (strain 630) (Peptoclostridium difficile)).